A 73-amino-acid polypeptide reads, in one-letter code: uncharacterized protein (73 aa).

A signal peptide spans 1-28 (MKFLLSVIAGLLILALYLFWKVQPPVWI).

This is an uncharacterized protein from Bacillus subtilis (strain 168).